Reading from the N-terminus, the 282-residue chain is Serine/arginine-rich splicing factor 8 (282 aa).

S2 is subject to N-acetylserine. A phosphoserine mark is found at S2 and S26. An RRM domain is found at 14–92 (ITLKVDNLTY…RELRVQVARY (79 aa)). Residues 91–282 (RYGRRDLPRS…SPEEEGQMSS (192 aa)) form a disordered region. Positions 93–107 (GRRDLPRSRQGEPRG) are enriched in basic and acidic residues. Basic residues-rich tracts occupy residues 116-136 (RRSR…RSRS) and 144-154 (SRSRSRYRGSR). Composition is skewed to low complexity over residues 155–177 (YSRS…PYSR) and 185–200 (YGGS…NSRY). A phosphoserine mark is found at S156, S158, S171, S173, and S196. Positions 201 to 210 (SRYHSSRSHS) are enriched in basic residues. 2 stretches are compositionally biased toward low complexity: residues 211–227 (KSGS…SKSS) and 234–255 (SSSV…SPPR). Residues 256-271 (VSKRKSKSRSRSKRPP) are compositionally biased toward basic residues. S273 is modified (phosphoserine).

The protein belongs to the splicing factor SR family. As to expression, strongly expressed in pancreas, spleen and prostate. Weakly expressed in lung, liver and thymus.

Its subcellular location is the nucleus. Functionally, involved in pre-mRNA alternative splicing. The protein is Serine/arginine-rich splicing factor 8 (SRSF8) of Homo sapiens (Human).